The chain runs to 359 residues: MQTIEVNGASPYEVTIGHNLFKDVAKSMSQLGANQAAIITQPVMGETAKKLVGAIEALGKEATIITVPDAEDGKNLNVAGDCWDVLGRKAFGRKDVIISLGGGAVTDLAGFVAACWMRGIAVIHVPTTLLSMVDAAVGGKTGINTSAGKNLVGAFHEPSGVFIDLDMIATLPDREKISGSAEIIKTGFIADTKILSLYEEDPEACFNVEGYLPELIARSVAVKARVVASDLREAGQREILNYGHTFGHAVELKEKYEWRHGNAVSVGMMFVAALARNRGLITDELYLRHKNILSSVGLPTTYPEGHFAELYQAMLRDKKNRDGRIRFVALIGAGKTIRIEDADRAELIAAYETLNKGGV.

NAD(+) contacts are provided by residues 69–74 (DAEDGK), 103–107 (GAVTD), 127–128 (TT), K140, and K149. Zn(2+) is bound by residues E182, H244, and H260.

It belongs to the sugar phosphate cyclases superfamily. Dehydroquinate synthase family. Requires NAD(+) as cofactor. Co(2+) is required as a cofactor. It depends on Zn(2+) as a cofactor.

It localises to the cytoplasm. It carries out the reaction 7-phospho-2-dehydro-3-deoxy-D-arabino-heptonate = 3-dehydroquinate + phosphate. Its pathway is metabolic intermediate biosynthesis; chorismate biosynthesis; chorismate from D-erythrose 4-phosphate and phosphoenolpyruvate: step 2/7. Functionally, catalyzes the conversion of 3-deoxy-D-arabino-heptulosonate 7-phosphate (DAHP) to dehydroquinate (DHQ). This chain is 3-dehydroquinate synthase, found in Corynebacterium pseudotuberculosis (strain C231).